Here is a 96-residue protein sequence, read N- to C-terminus: Small ribosomal subunit protein uS19 (96 aa).

The segment at Met-1–Val-30 is disordered. A compositionally biased stretch (basic and acidic residues) spans Pro-9 to Lys-24.

The protein belongs to the universal ribosomal protein uS19 family.

In terms of biological role, protein S19 forms a complex with S13 that binds strongly to the 16S ribosomal RNA. This is Small ribosomal subunit protein uS19 from Anaeromyxobacter sp. (strain Fw109-5).